Here is a 208-residue protein sequence, read N- to C-terminus: Protein-L-isoaspartate O-methyltransferase (208 aa).

S59 is a catalytic residue.

It belongs to the methyltransferase superfamily. L-isoaspartyl/D-aspartyl protein methyltransferase family.

It localises to the cytoplasm. The enzyme catalyses [protein]-L-isoaspartate + S-adenosyl-L-methionine = [protein]-L-isoaspartate alpha-methyl ester + S-adenosyl-L-homocysteine. Catalyzes the methyl esterification of L-isoaspartyl residues in peptides and proteins that result from spontaneous decomposition of normal L-aspartyl and L-asparaginyl residues. It plays a role in the repair and/or degradation of damaged proteins. The sequence is that of Protein-L-isoaspartate O-methyltransferase from Pectobacterium carotovorum subsp. carotovorum (strain PC1).